The sequence spans 169 residues: Ribosome maturation factor RimM (169 aa).

The region spanning 96 to 169 (DGEYYWADLI…RILVDWGLDY (74 aa)) is the PRC barrel domain.

Belongs to the RimM family. As to quaternary structure, binds ribosomal protein uS19.

Its subcellular location is the cytoplasm. In terms of biological role, an accessory protein needed during the final step in the assembly of 30S ribosomal subunit, possibly for assembly of the head region. Essential for efficient processing of 16S rRNA. May be needed both before and after RbfA during the maturation of 16S rRNA. It has affinity for free ribosomal 30S subunits but not for 70S ribosomes. The chain is Ribosome maturation factor RimM from Chromobacterium violaceum (strain ATCC 12472 / DSM 30191 / JCM 1249 / CCUG 213 / NBRC 12614 / NCIMB 9131 / NCTC 9757 / MK).